A 475-amino-acid chain; its full sequence is Siroheme synthase (475 aa).

The segment at 1 to 204 (MDYLPVFLNI…GRDQAAQDYL (204 aa)) is precorrin-2 dehydrogenase /sirohydrochlorin ferrochelatase. Residues 22-23 (EI) and 43-44 (PA) each bind NAD(+). At S129 the chain carries Phosphoserine. The interval 218 to 475 (GEVYLVGAGP…MGTSSGPGYP (258 aa)) is uroporphyrinogen-III C-methyltransferase. Residue P227 participates in S-adenosyl-L-methionine binding. Catalysis depends on D250, which acts as the Proton acceptor. K272 functions as the Proton donor in the catalytic mechanism. S-adenosyl-L-methionine is bound by residues 303-305 (GGD), I308, 333-334 (TA), M385, and G414.

In the N-terminal section; belongs to the precorrin-2 dehydrogenase / sirohydrochlorin ferrochelatase family. This sequence in the C-terminal section; belongs to the precorrin methyltransferase family.

It catalyses the reaction uroporphyrinogen III + 2 S-adenosyl-L-methionine = precorrin-2 + 2 S-adenosyl-L-homocysteine + H(+). The catalysed reaction is precorrin-2 + NAD(+) = sirohydrochlorin + NADH + 2 H(+). It carries out the reaction siroheme + 2 H(+) = sirohydrochlorin + Fe(2+). The protein operates within cofactor biosynthesis; adenosylcobalamin biosynthesis; precorrin-2 from uroporphyrinogen III: step 1/1. Its pathway is cofactor biosynthesis; adenosylcobalamin biosynthesis; sirohydrochlorin from precorrin-2: step 1/1. It participates in porphyrin-containing compound metabolism; siroheme biosynthesis; precorrin-2 from uroporphyrinogen III: step 1/1. It functions in the pathway porphyrin-containing compound metabolism; siroheme biosynthesis; siroheme from sirohydrochlorin: step 1/1. The protein operates within porphyrin-containing compound metabolism; siroheme biosynthesis; sirohydrochlorin from precorrin-2: step 1/1. Multifunctional enzyme that catalyzes the SAM-dependent methylations of uroporphyrinogen III at position C-2 and C-7 to form precorrin-2 via precorrin-1. Then it catalyzes the NAD-dependent ring dehydrogenation of precorrin-2 to yield sirohydrochlorin. Finally, it catalyzes the ferrochelation of sirohydrochlorin to yield siroheme. This Nitrosomonas europaea (strain ATCC 19718 / CIP 103999 / KCTC 2705 / NBRC 14298) protein is Siroheme synthase.